A 154-amino-acid polypeptide reads, in one-letter code: Superoxide dismutase [Cu-Zn] (154 aa).

3 residues coordinate Cu cation: histidine 47, histidine 49, and histidine 64. A disulfide bridge links cysteine 58 with cysteine 147. 4 residues coordinate Zn(2+): histidine 64, histidine 72, histidine 81, and aspartate 84. Histidine 121 contacts Cu cation. Position 144 (arginine 144) interacts with substrate.

It belongs to the Cu-Zn superoxide dismutase family. As to quaternary structure, homodimer. Requires Cu cation as cofactor. Zn(2+) serves as cofactor.

The protein localises to the cytoplasm. The enzyme catalyses 2 superoxide + 2 H(+) = H2O2 + O2. Destroys radicals which are normally produced within the cells and which are toxic to biological systems. This is Superoxide dismutase [Cu-Zn] (SOD1) from Eremothecium gossypii (strain ATCC 10895 / CBS 109.51 / FGSC 9923 / NRRL Y-1056) (Yeast).